A 485-amino-acid polypeptide reads, in one-letter code: NADH-quinone oxidoreductase subunit N (485 aa).

The next 14 helical transmembrane spans lie at 10-30 (AMLPLLIVGLTVVVVMLSIAW), 35-55 (FINATLTVIGLNLALLSLYFV), 75-95 (FYIGLVIVASLATSTFAYPWL), 104-124 (EFYLLVLIATMGGILLASANH), 125-145 (LASLFLGIELISLPLFGLIGY), 159-179 (YMLLSAAASSFLLFGMALLYA), 203-223 (ILAGLGMMIVGLGFKLSLVPF), 235-255 (PAPVSTFLATASKIAIFAVVM), 271-291 (LVLSLIAVASILFGNLMAISQ), 297-317 (LLGYSSIAHLGYLLIALVAVQ), 327-347 (GVYLAGYLFSSLGAFGVVSLM), 374-394 (AVMTVMMLSLAGIPMTLGFIG), 408-427 (WWLTGAVVLGSAIGLYYYLR), and 449-469 (ALTAGGVVVLISAILVLVLGI).

Belongs to the complex I subunit 2 family. As to quaternary structure, NDH-1 is composed of 13 different subunits. Subunits NuoA, H, J, K, L, M, N constitute the membrane sector of the complex.

The protein resides in the cell inner membrane. The catalysed reaction is a quinone + NADH + 5 H(+)(in) = a quinol + NAD(+) + 4 H(+)(out). Its function is as follows. NDH-1 shuttles electrons from NADH, via FMN and iron-sulfur (Fe-S) centers, to quinones in the respiratory chain. The immediate electron acceptor for the enzyme in this species is believed to be ubiquinone. Couples the redox reaction to proton translocation (for every two electrons transferred, four hydrogen ions are translocated across the cytoplasmic membrane), and thus conserves the redox energy in a proton gradient. This chain is NADH-quinone oxidoreductase subunit N, found in Yersinia enterocolitica serotype O:8 / biotype 1B (strain NCTC 13174 / 8081).